The following is a 478-amino-acid chain: Zinc metalloproteinase/disintegrin (478 aa).

The signal sequence occupies residues 1 to 20; that stretch reads MIEVLLVTICLAVFPYPGSS. The propeptide occupies 21 to 190; the sequence is IILESGNVDD…KASQLYLTPE (170 aa). A Pyrrolidone carboxylic acid modification is found at Gln-191. Positions 197 to 392 constitute a Peptidase M12B domain; it reads RYIELAIVVD…SKPQCIINAP (196 aa). Residues Glu-200 and Asp-284 each contribute to the Ca(2+) site. 3 cysteine pairs are disulfide-bonded: Cys-308-Cys-387, Cys-349-Cys-371, and Cys-351-Cys-354. His-333 contacts Zn(2+). The active site involves Glu-334. Residues His-337 and His-343 each contribute to the Zn(2+) site. Residues Cys-387 and Asn-390 each contribute to the Ca(2+) site. Positions 393–410 are excised as a propeptide; that stretch reads LRTDTVSTPVSGNEFLEA. One can recognise a Disintegrin domain in the interval 400 to 478; the sequence is TPVSGNEFLE…GQSADCPRNS (79 aa). 6 disulfide bridges follow: Cys-414–Cys-429, Cys-416–Cys-424, Cys-423–Cys-446, Cys-437–Cys-443, Cys-442–Cys-467, and Cys-455–Cys-474. Residues 459–461 carry the Cell attachment site motif; it reads RGD. The disordered stretch occupies residues 459-478; the sequence is RGDNPDDRCTGQSADCPRNS. Positions 468–478 are enriched in polar residues; that stretch reads TGQSADCPRNS.

Belongs to the venom metalloproteinase (M12B) family. P-II subfamily. P-IIa sub-subfamily. As to quaternary structure, monomer. The cofactor is Zn(2+). In terms of processing, not N-glycosylated. In terms of tissue distribution, expressed by the venom gland.

The protein localises to the secreted. It carries out the reaction Cleavage of 3-Asn-|-Gln-4, 10-His-|-Leu-11 and 14-Ala-|-Leu-15 in the insulin B chain, and the bond Z-Gly-Pro-|-Leu-Gly-Pro in a small molecule substrate of microbial collagenase.. Zinc protease that induces hemorrhage. Functionally, inhibits platelet aggregation induced by ADP, thrombin, and collagen. Acts by inhibiting fibrinogen interaction with platelet receptors GPIIb/GPIIIa (ITGA2B/ITGB3). This Protobothrops flavoviridis (Habu) protein is Zinc metalloproteinase/disintegrin.